A 138-amino-acid chain; its full sequence is Putative pre-16S rRNA nuclease (138 aa).

The protein belongs to the YqgF nuclease family.

It is found in the cytoplasm. In terms of biological role, could be a nuclease involved in processing of the 5'-end of pre-16S rRNA. The polypeptide is Putative pre-16S rRNA nuclease (Bacteroides thetaiotaomicron (strain ATCC 29148 / DSM 2079 / JCM 5827 / CCUG 10774 / NCTC 10582 / VPI-5482 / E50)).